We begin with the raw amino-acid sequence, 433 residues long: Tol-Pal system protein TolB (433 aa).

An N-terminal signal peptide occupies residues 1-26 (MSLMTKLGFRALVASCLIAAGGAAHA).

Belongs to the TolB family. As to quaternary structure, the Tol-Pal system is composed of five core proteins: the inner membrane proteins TolA, TolQ and TolR, the periplasmic protein TolB and the outer membrane protein Pal. They form a network linking the inner and outer membranes and the peptidoglycan layer.

The protein resides in the periplasm. Functionally, part of the Tol-Pal system, which plays a role in outer membrane invagination during cell division and is important for maintaining outer membrane integrity. The chain is Tol-Pal system protein TolB from Burkholderia thailandensis (strain ATCC 700388 / DSM 13276 / CCUG 48851 / CIP 106301 / E264).